The sequence spans 240 residues: UDP-2,3-diacylglucosamine hydrolase (240 aa).

Mn(2+) contacts are provided by aspartate 9, histidine 11, aspartate 43, asparagine 81, and histidine 116. 81–82 contacts substrate; it reads NR. The substrate site is built by aspartate 124, serine 162, lysine 166, lysine 169, and histidine 197. Residues histidine 197 and histidine 199 each coordinate Mn(2+).

The protein belongs to the LpxH family. Requires Mn(2+) as cofactor.

The protein localises to the cell inner membrane. It catalyses the reaction UDP-2-N,3-O-bis[(3R)-3-hydroxytetradecanoyl]-alpha-D-glucosamine + H2O = 2-N,3-O-bis[(3R)-3-hydroxytetradecanoyl]-alpha-D-glucosaminyl 1-phosphate + UMP + 2 H(+). It participates in glycolipid biosynthesis; lipid IV(A) biosynthesis; lipid IV(A) from (3R)-3-hydroxytetradecanoyl-[acyl-carrier-protein] and UDP-N-acetyl-alpha-D-glucosamine: step 4/6. Functionally, hydrolyzes the pyrophosphate bond of UDP-2,3-diacylglucosamine to yield 2,3-diacylglucosamine 1-phosphate (lipid X) and UMP by catalyzing the attack of water at the alpha-P atom. Involved in the biosynthesis of lipid A, a phosphorylated glycolipid that anchors the lipopolysaccharide to the outer membrane of the cell. This chain is UDP-2,3-diacylglucosamine hydrolase, found in Neisseria meningitidis serogroup C / serotype 2a (strain ATCC 700532 / DSM 15464 / FAM18).